The primary structure comprises 354 residues: MYKKVKIIHVDMDCFFAAVEMRDNPALRDIPIAIGGSRERRGVISTANYPARKFGVRSAMPTGMALKLCPHLTLLPGRFDAYKEASNHIREIFSRYTSRIEPLSLDEAYLDVTDSVHCHGSATLIAQEIRQTIFNELQLTASAGVAPVKFLAKIASDMNKPNGQFVITPAEVPAFLQTLPLAKIPGVGKVSAAKLEAMGLRTCGDVQKCDLVMLLKRFGKFGRILWERSQGIDERDVNSERLRKSVGVERTMAEDIHHWSECEAIIERLYPELERRLAKVKPDLLIARQGVKLKFDDFQQTTQEHVWPRLNKADLIATARKTWDERRGGRGVRLVGLHVTLLDPQMERQLVLGL.

In terms of domain architecture, UmuC spans 7–188 (IIHVDMDCFF…LPLAKIPGVG (182 aa)). Mg(2+) contacts are provided by aspartate 11 and aspartate 106. The active site involves glutamate 107.

The protein belongs to the DNA polymerase type-Y family. As to quaternary structure, monomer. Mg(2+) serves as cofactor.

The protein resides in the cytoplasm. It carries out the reaction DNA(n) + a 2'-deoxyribonucleoside 5'-triphosphate = DNA(n+1) + diphosphate. Poorly processive, error-prone DNA polymerase involved in untargeted mutagenesis. Copies undamaged DNA at stalled replication forks, which arise in vivo from mismatched or misaligned primer ends. These misaligned primers can be extended by PolIV. Exhibits no 3'-5' exonuclease (proofreading) activity. May be involved in translesional synthesis, in conjunction with the beta clamp from PolIII. In Shigella boydii serotype 18 (strain CDC 3083-94 / BS512), this protein is DNA polymerase IV.